The chain runs to 295 residues: Geranylfarnesyl diphosphate synthase (295 aa).

The isopentenyl diphosphate site is built by lysine 51, arginine 54, and histidine 83. Mg(2+) contacts are provided by aspartate 90 and aspartate 94. Arginine 99 lines the an all-trans-polyprenyl diphosphate pocket. Arginine 100 is a binding site for isopentenyl diphosphate. An all-trans-polyprenyl diphosphate contacts are provided by lysine 174, threonine 175, and glutamine 212.

Belongs to the FPP/GGPP synthase family. Homodimer. Requires Mg(2+) as cofactor.

The enzyme catalyses isopentenyl diphosphate + (2E,6E,10E)-geranylgeranyl diphosphate = (2E,6E,10E,14E)-geranylfarnesyl diphosphate + diphosphate. Involved in biosynthesis of the polyprenyl side-chain of methanophenazine, an electron carrier utilized for methanogenesis. Catalyzes the condensation of isopentenyl pyrophosphate with the allylic pyrophosphates to yield geranylfarnesyl diphosphate (GFPP). It prefers geranylgeranyl diphosphate (GGPP) and farnesyl diphosphate (FPP) as allylic substrate. In Methanosarcina mazei (strain ATCC BAA-159 / DSM 3647 / Goe1 / Go1 / JCM 11833 / OCM 88) (Methanosarcina frisia), this protein is Geranylfarnesyl diphosphate synthase.